Consider the following 53-residue polypeptide: Large ribosomal subunit protein bL33B (53 aa).

The protein belongs to the bacterial ribosomal protein bL33 family.

In Sorangium cellulosum (strain So ce56) (Polyangium cellulosum (strain So ce56)), this protein is Large ribosomal subunit protein bL33B.